We begin with the raw amino-acid sequence, 269 residues long: Protein CURLY FLAG LEAF 1 (269 aa).

The disordered stretch occupies residues 17-44; the sequence is SLNGGGGGGGGRRRGRRAAAAEGSDDSE. Positions 47–52 match the EAR motif; sequence TVELNS. In terms of domain architecture, WW spans 54–88; sequence VALPYHWEQCLDIRTGQVYYINWEDGTRTTIDPRS. Disordered stretches follow at residues 83-133 and 174-218; these read TIDP…SGYT and GDDE…SGAG. Low complexity-rich tracts occupy residues 87–106, 121–133, and 180–202; these read RSSSAYSPSPASRSASSSSR, AAAASTTTSSGYT, and SSSSSSSSSSSSASSSRGSAVSS. Residues 203 to 212 are compositionally biased toward polar residues; that stretch reads TLSSFSPTDE.

As to quaternary structure, binds to HDG1.

Negatively regulates the cuticle development probably by interacting with the HD-ZIP IV transcription factor HDG1. In Oryza sativa subsp. indica (Rice), this protein is Protein CURLY FLAG LEAF 1.